A 38-amino-acid chain; its full sequence is MKVRPSVKPMCEHCKVIKRHGRVMVICPANPKHKQRQG.

It belongs to the bacterial ribosomal protein bL36 family.

This Lactobacillus acidophilus (strain ATCC 700396 / NCK56 / N2 / NCFM) protein is Large ribosomal subunit protein bL36.